The following is a 61-amino-acid chain: MAKKSMIVKALRKPKYKTRQKNRCKLCGRPKGYMRDFSMCRICFRNHASAGLIPGVSKSSW.

Positions 24, 27, 40, and 43 each coordinate Zn(2+).

This sequence belongs to the universal ribosomal protein uS14 family. Zinc-binding uS14 subfamily. As to quaternary structure, part of the 30S ribosomal subunit. Contacts proteins S3 and S10. Zn(2+) is required as a cofactor.

Functionally, binds 16S rRNA, required for the assembly of 30S particles and may also be responsible for determining the conformation of the 16S rRNA at the A site. The protein is Small ribosomal subunit protein uS14 of Borrelia duttonii (strain Ly).